The following is a 100-amino-acid chain: Large ribosomal subunit protein bL21 (100 aa).

Belongs to the bacterial ribosomal protein bL21 family. As to quaternary structure, part of the 50S ribosomal subunit. Contacts protein L20.

In terms of biological role, this protein binds to 23S rRNA in the presence of protein L20. This Mycoplasma genitalium (strain ATCC 33530 / DSM 19775 / NCTC 10195 / G37) (Mycoplasmoides genitalium) protein is Large ribosomal subunit protein bL21.